The chain runs to 289 residues: Cysteine-rich venom protein Mr30 (289 aa).

A signal peptide spans Met-1 to Arg-24. Glu-33 is subject to 4-carboxyglutamate. One can recognise an SCP domain in the interval Val-62–Tyr-184.

It belongs to the CRISP family. Post-translationally, contains 11 disulfide bonds. As to expression, expressed by the venom duct.

It localises to the secreted. Has no proteolytic activity. The polypeptide is Cysteine-rich venom protein Mr30 (Conus marmoreus (Marble cone)).